The chain runs to 718 residues: Receptor-like protein 36 (718 aa).

The N-terminal stretch at 1–26 is a signal peptide; the sequence is MIRSLSYCFLTIYFFLSILPLPNTIA. Residues 27–695 lie on the Extracellular side of the membrane; the sequence is CPTRLLCRSD…SESEDQLLNW (669 aa). 18 LRR repeats span residues 70 to 94, 95 to 118, 120 to 141, 143 to 165, 166 to 188, 189 to 213, 214 to 238, 239 to 261, 262 to 286, 288 to 310, 312 to 334, 335 to 359, 360 to 383, 384 to 406, 407 to 431, 433 to 454, 455 to 480, and 481 to 505; these read DAIL…IGNL, SHLT…IGNL, QLES…SFAN, TKLS…LANL, TSLS…DLSG, LHNL…LLMI, PSLV…TFSL, SRLR…SISK, LVNL…ISKV, NLTS…VWRS, KLDY…EVID, GASL…ICKV, KDLY…LKYS, TYFH…LFIK, DSQL…LINC, RIEF…WLGS, LPYL…AYLG, and FPSI…YFAN. Asn-93 carries an N-linked (GlcNAc...) asparagine glycan. N-linked (GlcNAc...) asparagine glycans are attached at residues Asn-141 and Asn-164. N-linked (GlcNAc...) asparagine glycosylation occurs at Asn-199. Residue Asn-288 is glycosylated (N-linked (GlcNAc...) asparagine). N-linked (GlcNAc...) asparagine glycosylation is found at Asn-373 and Asn-393. The N-linked (GlcNAc...) asparagine glycan is linked to Asn-528. LRR repeat units lie at residues 550–574, 575–598, 599–622, and 624–647; these read FEGF…IGLL, SELR…LANI, TNLE…LGKL, and FLSN…QFAT. 5 N-linked (GlcNAc...) asparagine glycosylation sites follow: Asn-581, Asn-597, Asn-610, Asn-629, and Asn-649. A helical membrane pass occupies residues 696 to 716; the sequence is IAAAIAFGPGMFCGLVIGHIF. At 717-718 the chain is on the cytoplasmic side; the sequence is TS.

This sequence belongs to the RLP family.

The protein localises to the cell membrane. In Arabidopsis thaliana (Mouse-ear cress), this protein is Receptor-like protein 36.